The chain runs to 413 residues: Tyrosine--tRNA ligase (413 aa).

Positions 55-64 (PTRPDLHLGH) match the 'HIGH' region motif. Residues 242–246 (KMSKS) carry the 'KMSKS' region motif. Lysine 245 provides a ligand contact to ATP. An S4 RNA-binding domain is found at 346–410 (VKLSYILREC…GKKAFRRLVK (65 aa)).

This sequence belongs to the class-I aminoacyl-tRNA synthetase family. TyrS type 2 subfamily. As to quaternary structure, homodimer.

Its subcellular location is the cytoplasm. It catalyses the reaction tRNA(Tyr) + L-tyrosine + ATP = L-tyrosyl-tRNA(Tyr) + AMP + diphosphate + H(+). Its function is as follows. Catalyzes the attachment of tyrosine to tRNA(Tyr) in a two-step reaction: tyrosine is first activated by ATP to form Tyr-AMP and then transferred to the acceptor end of tRNA(Tyr). This chain is Tyrosine--tRNA ligase, found in Synechococcus sp. (strain JA-2-3B'a(2-13)) (Cyanobacteria bacterium Yellowstone B-Prime).